Reading from the N-terminus, the 448-residue chain is Ribulose bisphosphate carboxylase large chain (448 aa).

Lysine 4 is subject to N6,N6,N6-trimethyllysine. Substrate contacts are provided by asparagine 113 and threonine 163. Residue lysine 165 is the Proton acceptor of the active site. Residue lysine 167 participates in substrate binding. Lysine 191, aspartate 193, and glutamate 194 together coordinate Mg(2+). Lysine 191 carries the N6-carboxylysine modification. Histidine 284 serves as the catalytic Proton acceptor. 3 residues coordinate substrate: arginine 285, histidine 317, and serine 369.

This sequence belongs to the RuBisCO large chain family. Type I subfamily. As to quaternary structure, heterohexadecamer of 8 large chains and 8 small chains; disulfide-linked. The disulfide link is formed within the large subunit homodimers. The cofactor is Mg(2+). Post-translationally, the disulfide bond which can form in the large chain dimeric partners within the hexadecamer appears to be associated with oxidative stress and protein turnover.

It is found in the plastid. The protein resides in the chloroplast. The enzyme catalyses 2 (2R)-3-phosphoglycerate + 2 H(+) = D-ribulose 1,5-bisphosphate + CO2 + H2O. It carries out the reaction D-ribulose 1,5-bisphosphate + O2 = 2-phosphoglycolate + (2R)-3-phosphoglycerate + 2 H(+). RuBisCO catalyzes two reactions: the carboxylation of D-ribulose 1,5-bisphosphate, the primary event in carbon dioxide fixation, as well as the oxidative fragmentation of the pentose substrate in the photorespiration process. Both reactions occur simultaneously and in competition at the same active site. The chain is Ribulose bisphosphate carboxylase large chain from Eucryphia lucida (Leatherwood).